Reading from the N-terminus, the 270-residue chain is 4-hydroxy-tetrahydrodipicolinate reductase (270 aa).

Residues 11-16 (GAGGRM) and Glu37 each bind NAD(+). Residue Arg38 participates in NADP(+) binding. NAD(+) is bound by residues 101 to 103 (GTT) and 125 to 128 (APNM). Residue His158 is the Proton donor/acceptor of the active site. His159 provides a ligand contact to (S)-2,3,4,5-tetrahydrodipicolinate. The Proton donor role is filled by Lys162. 168 to 169 (GT) provides a ligand contact to (S)-2,3,4,5-tetrahydrodipicolinate.

This sequence belongs to the DapB family.

Its subcellular location is the cytoplasm. It carries out the reaction (S)-2,3,4,5-tetrahydrodipicolinate + NAD(+) + H2O = (2S,4S)-4-hydroxy-2,3,4,5-tetrahydrodipicolinate + NADH + H(+). The enzyme catalyses (S)-2,3,4,5-tetrahydrodipicolinate + NADP(+) + H2O = (2S,4S)-4-hydroxy-2,3,4,5-tetrahydrodipicolinate + NADPH + H(+). It functions in the pathway amino-acid biosynthesis; L-lysine biosynthesis via DAP pathway; (S)-tetrahydrodipicolinate from L-aspartate: step 4/4. In terms of biological role, catalyzes the conversion of 4-hydroxy-tetrahydrodipicolinate (HTPA) to tetrahydrodipicolinate. The sequence is that of 4-hydroxy-tetrahydrodipicolinate reductase from Shewanella sp. (strain MR-4).